The sequence spans 135 residues: MNSQLVGILLSALLGVALGHRTRCYDCGGGPSNSCKQTVITCGEGERCGFLDRKPQPSSEQAKQPSATLSHHYPACVATHHCNQVAIESVGDVTFTTQKNCCFGDLCNSAVASSVTPLCILAAAVTTLAWLLPGL.

The first 19 residues, 1–19 (MNSQLVGILLSALLGVALG), serve as a signal peptide directing secretion. The region spanning 22–121 (TRCYDCGGGP…ASSVTPLCIL (100 aa)) is the UPAR/Ly6 domain. Cystine bridges form between Cys24–Cys48, Cys27–Cys35, Cys42–Cys76, Cys82–Cys101, and Cys102–Cys107. Residue Thr68 is glycosylated (O-linked (GalNAc...) threonine). Asn108 is lipidated: GPI-anchor amidated asparagine. A propeptide spans 109–135 (SAVASSVTPLCILAAAVTTLAWLLPGL) (removed in mature form).

As to quaternary structure, homodimer. O-glycosylated. Expressed in embryonic tissue and adult lung, kidney, brain, liver and spleen.

Its subcellular location is the cell membrane. It is found in the cell projection. It localises to the filopodium. This Mus musculus (Mouse) protein is Lymphocyte antigen 6 complex locus protein G6d (Ly6g6d).